Consider the following 296-residue polypeptide: Fructose-bisphosphate aldolase class 1 (296 aa).

Glutamate 175 (proton acceptor) is an active-site residue. Lysine 212 (schiff-base intermediate with dihydroxyacetone-P) is an active-site residue.

This sequence belongs to the class I fructose-bisphosphate aldolase family.

The catalysed reaction is beta-D-fructose 1,6-bisphosphate = D-glyceraldehyde 3-phosphate + dihydroxyacetone phosphate. It functions in the pathway carbohydrate degradation; glycolysis; D-glyceraldehyde 3-phosphate and glycerone phosphate from D-glucose: step 4/4. This is Fructose-bisphosphate aldolase class 1 from Staphylococcus aureus (strain Mu3 / ATCC 700698).